The following is a 116-amino-acid chain: Iron-sulfur cluster insertion protein ErpA (116 aa).

Iron-sulfur cluster contacts are provided by Cys-44, Cys-108, and Cys-110.

Belongs to the HesB/IscA family. As to quaternary structure, homodimer. The cofactor is iron-sulfur cluster.

Functionally, required for insertion of 4Fe-4S clusters for at least IspG. The protein is Iron-sulfur cluster insertion protein ErpA of Francisella philomiragia subsp. philomiragia (strain ATCC 25017 / CCUG 19701 / FSC 153 / O#319-036).